A 358-amino-acid chain; its full sequence is MTKDEDFKLLKIQTFSLRVNIHCEGCNKKVKKLLQRIEGVCHVKIEAEHQKVTVSGSVDSATLINKLVKAGKHAELWSPNPNQNQPQKPKTNDFIKNVNQKGQKQGSAKSGIEACKPKNGPKGAAFVAEEDGDGSEEEDGDVQFPKPANQQQQQNVVNAKKNSGGAAMNNGNNGVNAASKKVNQKQSNHNQNTQQVMAAMRMRTAGKMSTGVEANEIGALMGLAGFNGATNAVNHPPNGIQQQLQAPPLNNVNGVTNHNLTNSNGGMMMNMNGYNNHHPMNMQSRQMMHQPQQMMYQRSSFVPASSNGYYYNYTPSPYSYYPYYPYASDQYQQQSSHSHATNMSSEEDAGNNNSCNIM.

Residues 12–75 (IQTFSLRVNI…KLVKAGKHAE (64 aa)) enclose the HMA domain. Positions 23 and 26 each coordinate a metal cation. Disordered regions lie at residues 100 to 194 (QKGQ…QNTQ) and 332 to 358 (QQQS…CNIM). Residues 128 to 141 (AEEDGDGSEEEDGD) are compositionally biased toward acidic residues. Over residues 148 to 181 (ANQQQQQNVVNAKKNSGGAAMNNGNNGVNAASKK) the composition is skewed to low complexity. Polar residues-rich tracts occupy residues 184–194 (QKQSNHNQNTQ) and 339–358 (HATN…CNIM). Cysteine methyl ester is present on Cys-355. Cys-355 carries the S-farnesyl cysteine lipid modification. Positions 356 to 358 (NIM) are cleaved as a propeptide — removed in mature form.

The protein belongs to the HIPP family.

In terms of biological role, heavy-metal-binding protein. This is Heavy metal-associated isoprenylated plant protein 37 from Arabidopsis thaliana (Mouse-ear cress).